The following is a 336-amino-acid chain: N-acetylornithine carbamoyltransferase (336 aa).

Residues 49 to 52, W77, and R112 each bind carbamoyl phosphate; that span reads SMRT. A N(2)-acetyl-L-ornithine-binding site is contributed by E144. Residue 148-151 participates in carbamoyl phosphate binding; that stretch reads HPCQ. N(2)-acetyl-L-ornithine is bound by residues K252 and L295. 294–295 is a carbamoyl phosphate binding site; the sequence is CL. K302 carries the N6-carboxylysine modification. R322 contacts carbamoyl phosphate.

Belongs to the aspartate/ornithine carbamoyltransferase superfamily. AOTCase family. As to quaternary structure, homotrimer.

The protein localises to the cytoplasm. It carries out the reaction N(2)-acetyl-L-ornithine + carbamoyl phosphate = N(2)-acetyl-L-citrulline + phosphate + H(+). It functions in the pathway amino-acid biosynthesis; L-arginine biosynthesis. Carboxylation at Lys-302 increases the catalytic activity of the enzyme. Functionally, catalyzes the transfer of the carbamoyl group from carbamoyl phosphate to the delta-amino group of N(2)-acetyl-L-ornithine to produce N(2)-acetyl-L-citrulline. This is a step in an alternative arginine biosynthesis pathway. The enzyme has no activity with ornithine. In Xylella fastidiosa (strain 9a5c), this protein is N-acetylornithine carbamoyltransferase.